The following is a 421-amino-acid chain: ATP phosphoribosyltransferase regulatory subunit (421 aa).

The protein belongs to the class-II aminoacyl-tRNA synthetase family. HisZ subfamily. In terms of assembly, heteromultimer composed of HisG and HisZ subunits.

It localises to the cytoplasm. It functions in the pathway amino-acid biosynthesis; L-histidine biosynthesis; L-histidine from 5-phospho-alpha-D-ribose 1-diphosphate: step 1/9. Functionally, required for the first step of histidine biosynthesis. May allow the feedback regulation of ATP phosphoribosyltransferase activity by histidine. This Clostridium novyi (strain NT) protein is ATP phosphoribosyltransferase regulatory subunit.